The sequence spans 221 residues: Probable N-acetyl-alpha-D-glucosaminyl L-malate deacetylase 2 (221 aa).

Histidine 11, aspartate 14, and histidine 125 together coordinate Zn(2+).

It belongs to the PIGL family. Zn(2+) serves as cofactor.

It catalyses the reaction (S)-malyl N-acetyl-alpha-D-glucosaminide + H2O = (S)-malyl alpha-D-glucosaminide + acetate. Functionally, involved in bacillithiol (BSH) biosynthesis. Catalyzes the second step of the pathway, the deacetylation of N-acetylglucosaminylmalate (GlcNAc-Mal) to glucosamine malate (GlcN-Mal). This is Probable N-acetyl-alpha-D-glucosaminyl L-malate deacetylase 2 from Bacillus subtilis (strain 168).